Here is a 69-residue protein sequence, read N- to C-terminus: Protein transport protein Sec61 subunit gamma-1 (69 aa).

The residue at position 1 (M1) is an N-acetylmethionine. Over M1–E32 the chain is Cytoplasmic. The chain crosses the membrane as a helical span at residues F33–I61. Topologically, residues N62 to T69 are extracellular.

Belongs to the SecE/SEC61-gamma family. As to quaternary structure, heterotrimeric complex composed of SEC61-alpha, SEC61-beta and SEC61-gamma.

The protein localises to the endoplasmic reticulum membrane. In terms of biological role, necessary for protein translocation in the endoplasmic reticulum. The sequence is that of Protein transport protein Sec61 subunit gamma-1 (SEC61G1) from Arabidopsis thaliana (Mouse-ear cress).